A 171-amino-acid polypeptide reads, in one-letter code: Adenine phosphoribosyltransferase (171 aa).

Belongs to the purine/pyrimidine phosphoribosyltransferase family. Homodimer.

Its subcellular location is the cytoplasm. The enzyme catalyses AMP + diphosphate = 5-phospho-alpha-D-ribose 1-diphosphate + adenine. Its pathway is purine metabolism; AMP biosynthesis via salvage pathway; AMP from adenine: step 1/1. In terms of biological role, catalyzes a salvage reaction resulting in the formation of AMP, that is energically less costly than de novo synthesis. The chain is Adenine phosphoribosyltransferase from Geotalea daltonii (strain DSM 22248 / JCM 15807 / FRC-32) (Geobacter daltonii).